Consider the following 277-residue polypeptide: MMSKDKPQIPSGEKMLDIPEGLWTKCPGCNRFLYTKELELNQSVCHYCQHHFPLKAPERIACITDPGSFIECEKHLHSVDILGFNGEKSYQERLDYYRNKTALDEAVVCGSCTIGSIPVFLCVMDFGFLGGSMGSVVGEKITRMIEKSLSAKTPLLIISASGGARMYEGMFSLMQMAKTAAALQRLSQAHVPYISLLTNPTMAGVIASFASLGDVILAEPKAMIGFAGSRVIKETTQQELPPGFQTAEFLLEKGLIDKIVHRKELRSTLKQLLYFLT.

In terms of domain architecture, CoA carboxyltransferase N-terminal spans 22-277 (LWTKCPGCNR…TLKQLLYFLT (256 aa)). Residues Cys-26, Cys-29, Cys-45, and Cys-48 each contribute to the Zn(2+) site. The C4-type zinc finger occupies 26–48 (CPGCNRFLYTKELELNQSVCHYC).

It belongs to the AccD/PCCB family. In terms of assembly, acetyl-CoA carboxylase is a heterohexamer composed of biotin carboxyl carrier protein (AccB), biotin carboxylase (AccC) and two subunits each of ACCase subunit alpha (AccA) and ACCase subunit beta (AccD). The cofactor is Zn(2+).

It localises to the cytoplasm. The catalysed reaction is N(6)-carboxybiotinyl-L-lysyl-[protein] + acetyl-CoA = N(6)-biotinyl-L-lysyl-[protein] + malonyl-CoA. It functions in the pathway lipid metabolism; malonyl-CoA biosynthesis; malonyl-CoA from acetyl-CoA: step 1/1. Its function is as follows. Component of the acetyl coenzyme A carboxylase (ACC) complex. Biotin carboxylase (BC) catalyzes the carboxylation of biotin on its carrier protein (BCCP) and then the CO(2) group is transferred by the transcarboxylase to acetyl-CoA to form malonyl-CoA. The chain is Acetyl-coenzyme A carboxylase carboxyl transferase subunit beta from Methylacidiphilum infernorum (isolate V4) (Methylokorus infernorum (strain V4)).